Consider the following 524-residue polypeptide: Butyrophilin subfamily 1 member A1 (524 aa).

Positions 1–26 are cleaved as a signal peptide; sequence MAVPTNSCLLVCLLTLTVLQLPTLDS. The Extracellular segment spans residues 27–247; sequence AAPFDVTAPQ…APFVPRLTPW (221 aa). Ig-like V-type domains are found at residues 29 to 141 and 149 to 235; these read PFDV…VYLK and PQIS…VEIS. 2 cysteine pairs are disulfide-bonded: cysteine 51-cysteine 125 and cysteine 165-cysteine 219. N-linked (GlcNAc...) asparagine glycans are attached at residues asparagine 56 and asparagine 216. A helical membrane pass occupies residues 248–268; it reads IVAVAIILLALGFLTIGSIFF. The Cytoplasmic portion of the chain corresponds to 269 to 524; it reads TWKLYKERSS…IPFSPSQAAP (256 aa). The B30.2/SPRY domain occupies 286–480; it reads SKERLLEELR…LTICSTANGP (195 aa).

The protein belongs to the immunoglobulin superfamily. BTN/MOG family. As to quaternary structure, seems to associate with xanthine dehydrogenase/oxidase. N-glycosylated. As to expression, strongly expressed in lactating mammary tissue (at protein level). About 100-fold lower levels in virgin mammary tissue. Also detected in spleen and thymus at 10-20 times lower levels compared to those detected in virgin mammary gland. Very low levels in several other tissues, including brain, heart, kidney, lymph node, lung and small intestine. In the thymus, detected in the stroma, in epithelial cells (at protein level). Most prominent in medullary areas of the thymus and at the corticomedullary junction (at protein level).

The protein resides in the membrane. Functionally, may function in the secretion of milk-fat droplets. May act as a specific membrane-associated receptor for the association of cytoplasmic droplets with the apical plasma membrane. Inhibits the proliferation of CD4 and CD8 T-cells activated by anti-CD3 antibodies, T-cell metabolism and IL2 and IFNG secretion. The sequence is that of Butyrophilin subfamily 1 member A1 (Btn1a1) from Mus musculus (Mouse).